Here is a 1981-residue protein sequence, read N- to C-terminus: Nonribosomal peptide synthetase rstn8 (1981 aa).

Positions 251–638 are adenylation; that stretch reads SYAALEQESA…ELGEIEYQAS (388 aa). Residues 763–840 form the Carrier 1 domain; that stretch reads HHAGQKYDEM…ELFHRSQKTP (78 aa). O-(pantetheine 4'-phosphoryl)serine is present on Ser800. Positions 883–1293 are condensation 1; that stretch reads EDIYPCSPLQ…DASMGTILSQ (411 aa). In terms of domain architecture, Carrier 2 spans 1438-1514; that stretch reads EPLLPLEATL…CLASTLNSRP (77 aa). Residue Ser1475 is modified to O-(pantetheine 4'-phosphoryl)serine. A condensation 1 region spans residues 1586-1978; it reads EEQIDLVSFA…TFAQSIERII (393 aa). The segment at 1754–1774 is disordered; that stretch reads HHHHQHEGRQHHGASETNGNR.

It belongs to the NRP synthetase family. It depends on pantetheine 4'-phosphate as a cofactor.

It catalyses the reaction 2 L-tryptophan = cyclo(L-Trp-L-Trp) + 2 H2O. It functions in the pathway alkaloid biosynthesis. Functionally, nonribosomal peptide synthetase; part of the gene cluster that mediates the biosynthesis of okaramine B, a prenylated indole alkaloid that possesses an unusual octacyclic ring system, including a four-membered azetidine ring and an eight-membered azocine ring, and that exhibits insecticidal activity against silkworm larvae. Within the pathway, okaA acts as a bimodular non-ribosomal peptide synthetase (NRPS) that condenses two tryptophan molecules into cyclo(L-Trp-L-Trp). Prenylation by the prenyltransferase okaC then leads to the formation of cyclo(N8-(alpha,alpha-dimethylallyl)-L-Trp-6a-(alpha,alpha-dime-thylallyl)-L-Trp). This is followed by indole 2,3-epoxidation by the FAD-dependent monooxygenase okaB to facilitate the formation of the hexahydropyrrolo[2,3-b]indole (HPI) moiety of okaramine C. The cytochrome P450 monooxygenase okaD then likely catalyzes formation of the eight-membered ring of okaramine A. The dioxygenase okaE further forms the unusual 2-dimethyl-3-methyl-azetidine ring to yield 12-deshydroxyl okaramine E, as well as the hydroxylation of 12-deshydroxyl okaramine E to produce okaramine E. The cytochrome P450 monoxygenase okaG converts 12-deshydroxyl okaramine E into 3-desmethyl okaramine B which is further methylated by the methyltransferase okaF into okaramine B. In a shunt pathway, okaG and okaF together are also able to convert okaramine E into okaramine D. Okaramine H is produced by nonenzymatic conversion from okaramine A. In Penicillium ochrochloron, this protein is Nonribosomal peptide synthetase rstn8.